The primary structure comprises 465 residues: ATP synthase subunit beta (465 aa).

ATP is bound at residue 151-158 (GGAGVGKT).

The protein belongs to the ATPase alpha/beta chains family. In terms of assembly, F-type ATPases have 2 components, CF(1) - the catalytic core - and CF(0) - the membrane proton channel. CF(1) has five subunits: alpha(3), beta(3), gamma(1), delta(1), epsilon(1). CF(0) has four main subunits: a(1), b(1), b'(1) and c(9-12).

It is found in the cell inner membrane. It catalyses the reaction ATP + H2O + 4 H(+)(in) = ADP + phosphate + 5 H(+)(out). Produces ATP from ADP in the presence of a proton gradient across the membrane. The catalytic sites are hosted primarily by the beta subunits. This Chloroherpeton thalassium (strain ATCC 35110 / GB-78) protein is ATP synthase subunit beta.